Reading from the N-terminus, the 520-residue chain is Pentatricopeptide repeat-containing protein At1g28690, mitochondrial (520 aa).

The transit peptide at 1–19 (MRIFRFTSISPRILPSNHY) directs the protein to the mitochondrion. 11 PPR repeats span residues 68–98 (DLNI…LPKP), 99–133 (TLSA…GEKA), 134–168 (DGYT…RIIK), 174–208 (DDVL…NVVC), 209–235 (CTSM…TKVK), 236–271 (DIVV…GFHP), 272–306 (NIST…GVYT), 307–337 (HIKM…MQEK), 338–372 (NVFS…RIEP), 373–403 (NYVT…MQRD), and 409–439 (KMEH…MPER). Positions 444-520 (IWAALLSSCN…TIGRSWTSED (77 aa)) are type E motif.

This sequence belongs to the PPR family. PCMP-E subfamily.

The protein resides in the mitochondrion. This is Pentatricopeptide repeat-containing protein At1g28690, mitochondrial (PCMP-E34) from Arabidopsis thaliana (Mouse-ear cress).